Here is a 55-residue protein sequence, read N- to C-terminus: Hydrophobic protein LTI6B (55 aa).

Helical transmembrane passes span 8 to 28 (IDIL…FGCG) and 31 to 51 (FWIC…YAIY).

The protein belongs to the UPF0057 (PMP3) family.

Its subcellular location is the membrane. Functionally, plays a role in the regulation of membrane potential. Could mediate a proton leak. The protein is Hydrophobic protein LTI6B (LTI6B) of Oryza sativa subsp. indica (Rice).